Here is a 408-residue protein sequence, read N- to C-terminus: Lupus La protein (408 aa).

The HTH La-type RNA-binding domain occupies 7-99; the sequence is NEKMAALEAK…RRSPSKPLPE (93 aa). Phosphoserine is present on residues Ser92 and Ser94. The RRM domain occupies 111-187; that stretch reads RSVYIKGFPT…TDLLILFKDD (77 aa). Lys116 bears the N6-acetyllysine mark. The residue at position 120 (Thr120) is a Phosphothreonine. Lys128 is modified (N6-acetyllysine). Ser225 bears the Phosphoserine mark. The 122-residue stretch at 227–348 folds into the xRRM domain; the sequence is EEKIGCLLKF…KGKGNKAAQP (122 aa). N6-acetyllysine is present on residues Lys328, Lys341, and Lys360. Over residues 329–342 the composition is skewed to basic residues; that stretch reads WKSKGRRFKGKGKG. The disordered stretch occupies residues 329–408; that stretch reads WKSKGRRFKG…QKTENGAGDQ (80 aa). Thr362 carries the phosphothreonine modification. At Ser366 the chain carries Phosphoserine; by CK2. Over residues 384–395 the composition is skewed to basic and acidic residues; that stretch reads RAREETDKEEPA.

Interacts with DDX15. May interact with RUFY1. In terms of processing, phosphorylated. The phosphorylation sites are at the C-terminal part of the protein. Post-translationally, the N-terminus is blocked.

The protein localises to the nucleus. Binds to the 3' poly(U) terminus of nascent RNA polymerase III transcripts, protecting them from exonuclease digestion and facilitating their folding and maturation. In case of Coxsackievirus B3 infection, binds to the viral internal ribosome entry site (IRES) and stimulates the IRES-mediated translation. In Homo sapiens (Human), this protein is Lupus La protein (SSB).